Reading from the N-terminus, the 226-residue chain is Cobalt transport protein CbiM 1 (226 aa).

The next 6 membrane-spanning stretches (helical) occupy residues Gly-6–Tyr-26, Met-43–Val-63, Leu-75–Phe-95, Thr-107–Phe-127, Phe-135–Thr-155, and Val-181–Met-201.

It belongs to the CbiM family. In terms of assembly, forms an energy-coupling factor (ECF) transporter complex composed of an ATP-binding protein (A component, CbiO), a transmembrane protein (T component, CbiQ) and 2 possible substrate-capture proteins (S components, CbiM and CbiN) of unknown stoichimetry.

The protein localises to the cell inner membrane. It functions in the pathway cofactor biosynthesis; adenosylcobalamin biosynthesis. Its function is as follows. Part of the energy-coupling factor (ECF) transporter complex CbiMNOQ involved in cobalt import. The polypeptide is Cobalt transport protein CbiM 1 (cbim1) (Pelobacter propionicus (strain DSM 2379 / NBRC 103807 / OttBd1)).